A 69-amino-acid chain; its full sequence is UPF0337 protein XAC4007 (69 aa).

Belongs to the UPF0337 (CsbD) family.

The protein is UPF0337 protein XAC4007 of Xanthomonas axonopodis pv. citri (strain 306).